We begin with the raw amino-acid sequence, 33 residues long: Photosystem II reaction center protein Psb30 (33 aa).

Residues 5 to 25 (VIAQLASLALIIVLGPLVIGL) form a helical membrane-spanning segment.

It belongs to the Psb30/Ycf12 family. As to quaternary structure, PSII is composed of 1 copy each of membrane proteins PsbA, PsbB, PsbC, PsbD, PsbE, PsbF, PsbH, PsbI, PsbJ, PsbK, PsbL, PsbM, PsbT, PsbX, PsbY, PsbZ, Psb30/Ycf12, peripheral proteins of the oxygen-evolving complex and a large number of cofactors. It forms dimeric complexes.

It is found in the plastid. Its subcellular location is the chloroplast thylakoid membrane. Its function is as follows. A core subunit of photosystem II (PSII), probably helps stabilize the reaction center. In Chara vulgaris (Common stonewort), this protein is Photosystem II reaction center protein Psb30.